Consider the following 584-residue polypeptide: Phenylalanine--tRNA ligase beta subunit (584 aa).

A B5 domain is found at 290–369 (FSVRTKTVTH…RALGFNSLEP (80 aa)). Residues Asp347, Asp353, Asp356, and Asp357 each contribute to the Mg(2+) site.

Belongs to the phenylalanyl-tRNA synthetase beta subunit family. Type 2 subfamily. In terms of assembly, tetramer of two alpha and two beta subunits. The cofactor is Mg(2+).

It is found in the cytoplasm. The catalysed reaction is tRNA(Phe) + L-phenylalanine + ATP = L-phenylalanyl-tRNA(Phe) + AMP + diphosphate + H(+). This is Phenylalanine--tRNA ligase beta subunit from Haloarcula marismortui (strain ATCC 43049 / DSM 3752 / JCM 8966 / VKM B-1809) (Halobacterium marismortui).